Consider the following 123-residue polypeptide: Molluscan insulin-related peptide 1 (123 aa).

An N-terminal signal peptide occupies residues methionine 1 to glycine 31. Residue glutamine 32 is modified to Pyrrolidone carboxylic acid. Cystine bridges form between cysteine 48–cysteine 109, cysteine 60–cysteine 122, and cysteine 108–cysteine 113. A propeptide spanning residues methionine 68–valine 69 is cleaved from the precursor. Glutamine 99 bears the Pyrrolidone carboxylic acid mark.

Belongs to the insulin family. Heterodimer of a B chain and an A chain linked by two disulfide bonds. In terms of tissue distribution, expressed in the cerebral light-green cells which are giant neuroendocrines cells involved in the control of growth.

It localises to the cytoplasmic vesicle. Its subcellular location is the secretory vesicle. The protein is Molluscan insulin-related peptide 1 of Lymnaea stagnalis (Great pond snail).